The chain runs to 149 residues: MQVVLLQDVVKLGKKGDIVNVSEGYARNFLYPKNLAAPATESKLKELKTQKQTQAAKKQKEEAEAKALAAKINGLTVALKVKVGDAGRLFGAISNKDIADGLKSQHGYSIDKKKIVLKEPIKNLGTYKITLKIHPVAQADINVEVASMD.

Belongs to the bacterial ribosomal protein bL9 family.

Binds to the 23S rRNA. This chain is Large ribosomal subunit protein bL9, found in Desulforamulus reducens (strain ATCC BAA-1160 / DSM 100696 / MI-1) (Desulfotomaculum reducens).